Reading from the N-terminus, the 103-residue chain is Antitoxin VapB1 (103 aa).

Functionally, antitoxin component of a type II toxin-antitoxin (TA) system. Upon expression in E.coli neutralizes the effect of cognate toxin VapC1, partially inhibits the RNase activity of VapC1 in vitro. The protein is Antitoxin VapB1 (vapB1) of Rickettsia felis (strain ATCC VR-1525 / URRWXCal2) (Rickettsia azadi).